A 54-amino-acid chain; its full sequence is UPF0391 membrane protein pRL90066 (54 aa).

A run of 2 helical transmembrane segments spans residues 5 to 25 and 28 to 48; these read ALVFLVVALIAGVLGFGGIAG and ASIAQVLFFIFLVLFVVSLVM.

This sequence belongs to the UPF0391 family.

It is found in the cell membrane. In Rhizobium johnstonii (strain DSM 114642 / LMG 32736 / 3841) (Rhizobium leguminosarum bv. viciae), this protein is UPF0391 membrane protein pRL90066.